Reading from the N-terminus, the 186-residue chain is Protein GrpE (186 aa).

Composition is skewed to basic and acidic residues over residues 1–13 (MSDN…EEQH) and 23–34 (EETHQAEDAVEH). The segment at 1-34 (MSDNKTELNEEQHNATAEGEVSEETHQAEDAVEH) is disordered.

The protein belongs to the GrpE family. As to quaternary structure, homodimer.

It is found in the cytoplasm. Functionally, participates actively in the response to hyperosmotic and heat shock by preventing the aggregation of stress-denatured proteins, in association with DnaK and GrpE. It is the nucleotide exchange factor for DnaK and may function as a thermosensor. Unfolded proteins bind initially to DnaJ; upon interaction with the DnaJ-bound protein, DnaK hydrolyzes its bound ATP, resulting in the formation of a stable complex. GrpE releases ADP from DnaK; ATP binding to DnaK triggers the release of the substrate protein, thus completing the reaction cycle. Several rounds of ATP-dependent interactions between DnaJ, DnaK and GrpE are required for fully efficient folding. In Hydrogenovibrio crunogenus (strain DSM 25203 / XCL-2) (Thiomicrospira crunogena), this protein is Protein GrpE.